The following is a 364-amino-acid chain: 3-isopropylmalate dehydrogenase (364 aa).

G76–E89 serves as a coordination point for NAD(+). R96, R106, R134, and D223 together coordinate substrate. Mg(2+) contacts are provided by D223, D247, and D251. G281 to N293 is a binding site for NAD(+).

Belongs to the isocitrate and isopropylmalate dehydrogenases family. LeuB type 1 subfamily. Homodimer. Requires Mg(2+) as cofactor. The cofactor is Mn(2+).

Its subcellular location is the cytoplasm. The catalysed reaction is (2R,3S)-3-isopropylmalate + NAD(+) = 4-methyl-2-oxopentanoate + CO2 + NADH. The protein operates within amino-acid biosynthesis; L-leucine biosynthesis; L-leucine from 3-methyl-2-oxobutanoate: step 3/4. In terms of biological role, catalyzes the oxidation of 3-carboxy-2-hydroxy-4-methylpentanoate (3-isopropylmalate) to 3-carboxy-4-methyl-2-oxopentanoate. The product decarboxylates to 4-methyl-2 oxopentanoate. This is 3-isopropylmalate dehydrogenase from Shouchella clausii (strain KSM-K16) (Alkalihalobacillus clausii).